Reading from the N-terminus, the 486-residue chain is ATP synthase subunit beta (486 aa).

170 to 177 (GGAGVGKT) contacts ATP.

It belongs to the ATPase alpha/beta chains family. F-type ATPases have 2 components, CF(1) - the catalytic core - and CF(0) - the membrane proton channel. CF(1) has five subunits: alpha(3), beta(3), gamma(1), delta(1), epsilon(1). CF(0) has three main subunits: a(1), b(2) and c(9-12). The alpha and beta chains form an alternating ring which encloses part of the gamma chain. CF(1) is attached to CF(0) by a central stalk formed by the gamma and epsilon chains, while a peripheral stalk is formed by the delta and b chains.

It localises to the cell membrane. It catalyses the reaction ATP + H2O + 4 H(+)(in) = ADP + phosphate + 5 H(+)(out). Produces ATP from ADP in the presence of a proton gradient across the membrane. The catalytic sites are hosted primarily by the beta subunits. This chain is ATP synthase subunit beta, found in Clavibacter sepedonicus (Clavibacter michiganensis subsp. sepedonicus).